Consider the following 254-residue polypeptide: Lipid uptake coordinator A (254 aa).

4 helical membrane passes run Val-5–Val-25, Leu-44–Leu-64, Ile-85–Leu-105, and Leu-114–Leu-134. Residues Pro-143–Glu-254 form a disordered region. A compositionally biased stretch (basic residues) spans Leu-148–Thr-163. Over residues Ala-169–Val-191 the composition is skewed to acidic residues. Positions Glu-192 to Ala-220 are enriched in low complexity. Basic residues predominate over residues Leu-227 to Arg-244.

Interacts with the Mce1 and Mce4 accessory subunits Rv0199/OmamA, Rv0177/Mam1C and Rv3492c/Mam4B.

It localises to the cell membrane. Its function is as follows. Required for the import of both fatty acids and cholesterol during growth in macrophages and in axenic culture. Facilitates the uptake of these lipids by stabilizing protein subunits of the Mce1 and Mce4 multi-subunit transporters, which transport fatty acids and cholesterol, respectively. Required for full virulence in vivo. The chain is Lipid uptake coordinator A from Mycobacterium tuberculosis (strain ATCC 25618 / H37Rv).